A 79-amino-acid polypeptide reads, in one-letter code: Small ribosomal subunit protein bS16c (79 aa).

It belongs to the bacterial ribosomal protein bS16 family.

The protein localises to the plastid. The protein resides in the chloroplast. The polypeptide is Small ribosomal subunit protein bS16c (Thalassiosira pseudonana (Marine diatom)).